A 274-amino-acid polypeptide reads, in one-letter code: NADPH-dependent 7-cyano-7-deazaguanine reductase (274 aa).

80 to 82 provides a ligand contact to substrate; it reads VES. An NADPH-binding site is contributed by 82 to 83; it reads SK. C181 functions as the Thioimide intermediate in the catalytic mechanism. D188 serves as the catalytic Proton donor. Position 220-221 (220-221) interacts with substrate; the sequence is HE. Position 249-250 (249-250) interacts with NADPH; it reads RG.

The protein belongs to the GTP cyclohydrolase I family. QueF type 2 subfamily. Homodimer.

It localises to the cytoplasm. It catalyses the reaction 7-aminomethyl-7-carbaguanine + 2 NADP(+) = 7-cyano-7-deazaguanine + 2 NADPH + 3 H(+). It functions in the pathway tRNA modification; tRNA-queuosine biosynthesis. Catalyzes the NADPH-dependent reduction of 7-cyano-7-deazaguanine (preQ0) to 7-aminomethyl-7-deazaguanine (preQ1). This Burkholderia ambifaria (strain ATCC BAA-244 / DSM 16087 / CCUG 44356 / LMG 19182 / AMMD) (Burkholderia cepacia (strain AMMD)) protein is NADPH-dependent 7-cyano-7-deazaguanine reductase.